Consider the following 359-residue polypeptide: Outer membrane protein P5 (359 aa).

An N-terminal signal peptide occupies residues Met1–Ala21. The next 8 beta stranded transmembrane spans lie at Thr27–Gly37, Thr64–Ile75, Leu83–Asp91, His110–Glu121, Leu126–Val134, Gly164–Ala173, Leu178–Gln185, and Cys211–Arg219. In terms of domain architecture, OmpA-like spans Met233–Lys359. The cysteines at positions 332 and 344 are disulfide-linked.

The protein belongs to the outer membrane OOP (TC 1.B.6) superfamily. OmpA family. In terms of assembly, monomer and homodimer.

It localises to the cell outer membrane. Its subcellular location is the fimbrium. Its function is as follows. Acts as a fimbriae subunit, allowing adhesion to host cells. In terms of biological role, with TolR probably plays a role in maintaining the position of the peptidoglycan cell wall in the periplasm. Acts as a porin with low permeability that allows slow penetration of small solutes; an internal gate slows down solute passage. The protein is Outer membrane protein P5 of Haemophilus influenzae.